The chain runs to 267 residues: Thymidylate synthase (267 aa).

Residue Arg-24 participates in dUMP binding. His-54 contacts (6R)-5,10-methylene-5,6,7,8-tetrahydrofolate. 129-130 (RR) contributes to the dUMP binding site. The active-site Nucleophile is Cys-149. DUMP contacts are provided by residues 169-172 (RSAD), Asn-180, and 210-212 (HVY). Asp-172 is a binding site for (6R)-5,10-methylene-5,6,7,8-tetrahydrofolate. Residue Ala-266 participates in (6R)-5,10-methylene-5,6,7,8-tetrahydrofolate binding.

This sequence belongs to the thymidylate synthase family. Bacterial-type ThyA subfamily. In terms of assembly, homodimer.

Its subcellular location is the cytoplasm. The catalysed reaction is dUMP + (6R)-5,10-methylene-5,6,7,8-tetrahydrofolate = 7,8-dihydrofolate + dTMP. The protein operates within pyrimidine metabolism; dTTP biosynthesis. Catalyzes the reductive methylation of 2'-deoxyuridine-5'-monophosphate (dUMP) to 2'-deoxythymidine-5'-monophosphate (dTMP) while utilizing 5,10-methylenetetrahydrofolate (mTHF) as the methyl donor and reductant in the reaction, yielding dihydrofolate (DHF) as a by-product. This enzymatic reaction provides an intracellular de novo source of dTMP, an essential precursor for DNA biosynthesis. The chain is Thymidylate synthase from Paenarthrobacter aurescens (strain TC1).